We begin with the raw amino-acid sequence, 405 residues long: 26S proteasome regulatory subunit 8 homolog (405 aa).

N-acetylthreonine is present on Thr-2. An ATP-binding site is contributed by Gly-189–Thr-196.

It belongs to the AAA ATPase family. As to quaternary structure, may form a homodimer or a heterodimer with a related family member. Interacts with OLA1, TMA17, and UBR1. Post-translationally, N-acetylated by NAT1.

Its subcellular location is the cytoplasm. It is found in the nucleus. Its function is as follows. The 26S proteasome is involved in the ATP-dependent degradation of ubiquitinated proteins. The regulatory (or ATPase) complex confers ATP dependency and substrate specificity to the 26S complex. The chain is 26S proteasome regulatory subunit 8 homolog (RPT6) from Saccharomyces cerevisiae (strain ATCC 204508 / S288c) (Baker's yeast).